We begin with the raw amino-acid sequence, 108 residues long: ATP-dependent Clp protease adapter protein ClpS (108 aa).

The protein belongs to the ClpS family. In terms of assembly, binds to the N-terminal domain of the chaperone ClpA.

Involved in the modulation of the specificity of the ClpAP-mediated ATP-dependent protein degradation. The polypeptide is ATP-dependent Clp protease adapter protein ClpS (Leptospira borgpetersenii serovar Hardjo-bovis (strain JB197)).